Here is a 635-residue protein sequence, read N- to C-terminus: Glycosyltransferase-like protein gnt13 (635 aa).

The Cytoplasmic portion of the chain corresponds to 1–18 (MNINTLIINFNKVKRMKN). Residues 19–38 (FLILTLLVVMVVVFLQGPTL) traverse the membrane as a helical; Signal-anchor for type II membrane protein segment. Residues 39-635 (MINNSGQGMG…PNECFSDHHW (597 aa)) are Extracellular-facing. 2 N-linked (GlcNAc...) asparagine glycosylation sites follow: N41 and N179. Disordered regions lie at residues 300-358 (NINN…NNID) and 389-458 (NIDN…NNEP). Residues 389–456 (NIDNNNSNYN…NNNNNNNNNN (68 aa)) show a composition bias toward low complexity. N-linked (GlcNAc...) asparagine glycosylation is found at N393 and N535.

This sequence belongs to the glycosyltransferase 8 family. Highly divergent.

It localises to the membrane. This is Glycosyltransferase-like protein gnt13 (gnt13) from Dictyostelium discoideum (Social amoeba).